A 304-amino-acid chain; its full sequence is Transcription factor BEE 2 (304 aa).

Positions 74-132 are disordered; the sequence is FHMEPVKNNGHSRAITLQNKRKPEGKTEKREKKKIKAEDETEPSMKGKSNMSNTETSSE. The span at 82-91 shows a compositional bias: polar residues; that stretch reads NGHSRAITLQ. Positions 94–103 are enriched in basic and acidic residues; that stretch reads RKPEGKTEKR. Positions 120-132 are enriched in polar residues; it reads GKSNMSNTETSSE. Residues 147-197 enclose the bHLH domain; sequence EATDRHSLAERARREKISKKMKCLQDIVPGCNKVTGKAGMLDEIINYVQSL.

Homodimer. As to expression, expressed in stems and flowers.

It is found in the nucleus. Functionally, positive regulator of brassinosteroid signaling. In Arabidopsis thaliana (Mouse-ear cress), this protein is Transcription factor BEE 2 (BEE2).